Consider the following 184-residue polypeptide: ATP synthase subunit b, chloroplastic (184 aa).

Residues 27–49 (LATNLINLSVVLGVLIFFGKGVL) form a helical membrane-spanning segment.

It belongs to the ATPase B chain family. F-type ATPases have 2 components, F(1) - the catalytic core - and F(0) - the membrane proton channel. F(1) has five subunits: alpha(3), beta(3), gamma(1), delta(1), epsilon(1). F(0) has four main subunits: a(1), b(1), b'(1) and c(10-14). The alpha and beta chains form an alternating ring which encloses part of the gamma chain. F(1) is attached to F(0) by a central stalk formed by the gamma and epsilon chains, while a peripheral stalk is formed by the delta, b and b' chains.

The protein localises to the plastid. It localises to the chloroplast thylakoid membrane. F(1)F(0) ATP synthase produces ATP from ADP in the presence of a proton or sodium gradient. F-type ATPases consist of two structural domains, F(1) containing the extramembraneous catalytic core and F(0) containing the membrane proton channel, linked together by a central stalk and a peripheral stalk. During catalysis, ATP synthesis in the catalytic domain of F(1) is coupled via a rotary mechanism of the central stalk subunits to proton translocation. Its function is as follows. Component of the F(0) channel, it forms part of the peripheral stalk, linking F(1) to F(0). In Nicotiana tabacum (Common tobacco), this protein is ATP synthase subunit b, chloroplastic.